Here is a 98-residue protein sequence, read N- to C-terminus: Small ribosomal subunit protein bS6 (98 aa).

It belongs to the bacterial ribosomal protein bS6 family.

Its function is as follows. Binds together with bS18 to 16S ribosomal RNA. The polypeptide is Small ribosomal subunit protein bS6 (Moorella thermoacetica (strain ATCC 39073 / JCM 9320)).